A 299-amino-acid chain; its full sequence is Acetaldehyde dehydrogenase 6 (299 aa).

Cys-125 serves as the catalytic Acyl-thioester intermediate. Residues 156 to 164 (GAGPGTRAN) and Asn-275 each bind NAD(+).

This sequence belongs to the acetaldehyde dehydrogenase family.

It carries out the reaction acetaldehyde + NAD(+) + CoA = acetyl-CoA + NADH + H(+). In Rhodococcus jostii (strain RHA1), this protein is Acetaldehyde dehydrogenase 6 (hpdG).